The chain runs to 62 residues: UPF0337 protein gsr0040 (62 aa).

Basic and acidic residues-rich tracts occupy residues 1 to 15 (MGIDKRAEATAKDVQ) and 27 to 62 (DDPKLELEGKAKQVEASAEHKKEDLKDQAHRTIDNV). Residues 1 to 62 (MGIDKRAEAT…DQAHRTIDNV (62 aa)) are disordered.

This sequence belongs to the UPF0337 (CsbD) family.

This chain is UPF0337 protein gsr0040, found in Gloeobacter violaceus (strain ATCC 29082 / PCC 7421).